Reading from the N-terminus, the 1736-residue chain is Centrosomal protein of 152 kDa (1736 aa).

The interaction with PLK4 stretch occupies residues 1–60 (MSLEFGSVALQTQNEDEEFDKEDFEREKELQQLLTDLPHDMLDDELSSPERHDSDCSMDG). Residues 1 to 127 (MSLEFGSVAL…SGYSPPGKRE (127 aa)) form a disordered region. Basic and acidic residues-rich tracts occupy residues 61 to 82 (RAAEPHPSEHLERKWIERDILP) and 94 to 105 (EENRSKTEDQHL). Coiled-coil stretches lie at residues 228-481 (IIQL…AELG), 552-651 (HLVS…QEFD), 692-776 (LEVY…TERQ), 835-868 (AAVSKAEAAAVLAEEQARQVQQEKELATKEALRK), 950-1075 (NVMS…YEED), and 1205-1315 (GHCF…KIKR). Residues 571–592 (FQQSKDGDSGMETKTDTSEKTT) are disordered. Residues 575–592 (KDGDSGMETKTDTSEKTT) are compositionally biased toward basic and acidic residues. Thr-1277 bears the Phosphothreonine mark. 4 disordered regions span residues 1416-1479 (GTER…ASTA), 1543-1562 (EKNSSPRCISESRHTTLRSP), 1574-1614 (GSPT…SDST), and 1677-1736 (QQGK…SPLE). Residues 1462–1473 (RRLEESKHREMR) show a composition bias toward basic and acidic residues. Composition is skewed to polar residues over residues 1576 to 1595 (PTETDSIASEKSQGVGSQDS) and 1603 to 1614 (PSSSPAWPSDST). N6-acetyllysine is present on Lys-1714.

Belongs to the CEP152 family. In terms of assembly, interacts (via N-terminus) with PLK4; the interaction is mutally exclusive with a PLK4:CEP192 interaction. Interacts (via C-terminus) with CPAP (via-N-terminus). Interacts with CINP. Interacts with CDK5RAP2, WDR62, CEP63 and CEP131. CEP63, CDK5RAP2, CEP152, WDR62 are proposed to form a stepwise assembled complex at the centrosome forming a ring near parental centrioles. Interacts with DEUP1; this interaction recruits CEP152 to the deuterosome. The interactions with CEP63 and DEUP1 are mutually exclusive. Interacts with CCDC66.

The protein localises to the cytoplasm. It localises to the cytoskeleton. The protein resides in the microtubule organizing center. Its subcellular location is the centrosome. It is found in the centriole. Functionally, necessary for centrosome duplication; the function also seems to involve CEP63, CDK5RAP2 and WDR62 through a stepwise assembled complex at the centrosome that recruits CDK2 required for centriole duplication. Acts as a molecular scaffold facilitating the interaction of PLK4 and CPAP, 2 molecules involved in centriole formation. Proposed to snatch PLK4 away from PLK4:CEP92 complexes in early G1 daughter centriole and to reposition PLK4 at the outer boundary of a newly forming CEP152 ring structure. Also plays a key role in deuterosome-mediated centriole amplification in multiciliated that can generate more than 100 centrioles. Overexpression of cep152 can drive amplification of centrioles. This chain is Centrosomal protein of 152 kDa (Cep152), found in Mus musculus (Mouse).